We begin with the raw amino-acid sequence, 72 residues long: Disintegrin crotatroxin (72 aa).

The 72-residue stretch at 1–72 (AGEECDCGSP…ADCPRNGLYG (72 aa)) folds into the Disintegrin domain. 6 disulfides stabilise this stretch: C5–C20, C7–C15, C14–C37, C28–C34, C33–C58, and C46–C65. Positions 50 to 52 (RGD) match the Cell attachment site motif.

It belongs to the venom metalloproteinase (M12B) family. P-II subfamily. P-IIa sub-subfamily. In terms of assembly, monomer. Expressed by the venom gland.

It localises to the secreted. In terms of biological role, inhibits fibrinogen interaction with platelets. Acts by binding to the alpha-IIb/beta-3 (ITGA2B/ITGB3) on the platelet surface and inhibits aggregation induced by ADP, thrombin, platelet-activating factor and collagen. Inhibits ADP-induced platelet aggregation (IC(50) = 17.5nM), cancer cell migration in vitro, and experimental lung tumor colonization of cancer cells. This Crotalus atrox (Western diamondback rattlesnake) protein is Disintegrin crotatroxin.